The following is a 187-amino-acid chain: Ribosome-recycling factor (187 aa).

The protein belongs to the RRF family.

The protein resides in the cytoplasm. Responsible for the release of ribosomes from messenger RNA at the termination of protein biosynthesis. May increase the efficiency of translation by recycling ribosomes from one round of translation to another. This is Ribosome-recycling factor from Anaeromyxobacter sp. (strain Fw109-5).